The primary structure comprises 138 residues: Cysteine desulfuration protein SufE (138 aa).

The active-site Cysteine persulfide intermediate is the Cys51.

It belongs to the SufE family. As to quaternary structure, homodimer. Interacts with SufS.

It localises to the cytoplasm. The protein operates within cofactor biosynthesis; iron-sulfur cluster biosynthesis. Functionally, participates in cysteine desulfuration mediated by SufS. Cysteine desulfuration mobilizes sulfur from L-cysteine to yield L-alanine and constitutes an essential step in sulfur metabolism for biosynthesis of a variety of sulfur-containing biomolecules. Functions as a sulfur acceptor for SufS, by mediating the direct transfer of the sulfur atom from the S-sulfanylcysteine of SufS, an intermediate product of cysteine desulfuration process. This is Cysteine desulfuration protein SufE from Escherichia fergusonii (strain ATCC 35469 / DSM 13698 / CCUG 18766 / IAM 14443 / JCM 21226 / LMG 7866 / NBRC 102419 / NCTC 12128 / CDC 0568-73).